Consider the following 1951-residue polypeptide: [F-actin]-monooxygenase MICAL2 (1951 aa).

The interval 2 to 494 (GENEDEKQAQ…KHLYITKEMD (493 aa)) is monooxygenase domain. FAD contacts are provided by residues C97, 116–118 (EKR), 123–125 (RNN), F183, Y298, and D398. A Calponin-homology (CH) domain is found at 516 to 619 (DIRPNKLLTW…MVMYLSKFYE (104 aa)). The residue at position 631 (S631) is a Phosphoserine. A Nuclear localization signal motif is present at residues 660–681 (RKRTPRVDTQTEENDMNKRRRQ). Disordered regions lie at residues 663-712 (TPRV…SQNK) and 891-921 (KRVPHAHPPSPPSCLPSPHPAAASSPPAADS). A compositionally biased stretch (low complexity) spans 691 to 700 (SFSSRSLGSS). The span at 896–909 (AHPPSPPSCLPSPH) shows a compositional bias: pro residues. Over residues 910–921 (PAAASSPPAADS) the composition is skewed to low complexity. An LIM zinc-binding domain is found at 991–1053 (DTCYFCKKRV…KPHFVHCKTS (63 aa)). Zn(2+)-binding residues include C993, C996, H1014, C1017, C1020, C1023, C1043, and H1046. T1052 carries the post-translational modification Phosphoserine. Disordered regions lie at residues 1054–1141 (SKQR…RISP), 1158–1314 (TSED…VSPT), 1348–1368 (VEPGRESLRSPEEISSSEGCQ), 1383–1427 (ILGK…RKLG), 1451–1476 (HKTGEQLSQESAENIRGGSLKPTCSS), 1489–1580 (QKKA…AKKA), 1594–1624 (AQASDLSLPNSILRSRSLPSRPSKMFFSTTP), 1678–1697 (GDFFNSPKEEGPPGNRVPSL), 1706–1731 (STSMGQVAHPSSTGQDARKLEGGEGG), and 1747–1766 (PVTEATSSPTSSSAEEEADS). Residues 1061–1070 (AELNQQREEE) show a composition bias toward basic and acidic residues. Composition is skewed to polar residues over residues 1129–1138 (PRPSEWTSVR), 1228–1239 (HSLQSPTPSKYQ), and 1246–1256 (QSNSTPMNQRA). A compositionally biased stretch (pro residues) spans 1257–1268 (PSPPKEPPPPPS). A compositionally biased stretch (low complexity) spans 1269 to 1285 (LSSSSSLPSSFSSASVP). The span at 1291-1306 (DSSSPQVTYNLHSPQI) shows a compositional bias: polar residues. The tract at residues 1314–1353 (TPIYLRRARAQGIVKEIPLYLPHSPMLESTEDCLVEPGRE) is interaction with MAPK1. Over residues 1350 to 1359 (PGRESLRSPE) the composition is skewed to basic and acidic residues. The segment covering 1532-1545 (EAGKKTSPKPESKT) has biased composition (basic and acidic residues). Positions 1599-1616 (LSLPNSILRSRSLPSRPS) are enriched in low complexity. Residues 1678 to 1688 (GDFFNSPKEEG) show a composition bias toward basic and acidic residues. S1683 is modified (phosphoserine). Residues 1706–1720 (STSMGQVAHPSSTGQ) are compositionally biased toward polar residues. Positions 1749–1759 (TEATSSPTSSS) are enriched in low complexity. The region spanning 1789 to 1939 (KQEELKRLHK…ERTQDQHFEN (151 aa)) is the bMERB domain.

Belongs to the Mical family. As to quaternary structure, interacts with PLXNA4. Interacts with RAB1B. Interacts with MAPK1/ERK2. Interacts with RAB1B, RAB35, RAB8A, RAB10, RAB13 and RAB15 (in their GTP-bound forms); binding to RAB1B and RAB35 is of low affinity compared to other Rab proteins; binding to RAB1B and RAB35 is of low affinity compared to other Rab proteins; at least in case of RAB8A may bind 2 molecules of RAB8A simultaneously through a high and a low affinity binding site, respectively. FAD serves as cofactor. In terms of tissue distribution, expressed only in testis (at protein level).

The protein resides in the cytoplasm. Its subcellular location is the nucleus. The catalysed reaction is L-methionyl-[F-actin] + NADPH + O2 + H(+) = L-methionyl-(R)-S-oxide-[F-actin] + NADP(+) + H2O. Methionine monooxygenase that promotes depolymerization of F-actin by mediating oxidation of residues 'Met-44' and 'Met-47' on actin to form methionine-sulfoxide, resulting in actin filament disassembly and preventing repolymerization. Regulates the disassembly of branched actin networks also by oxidizing ARP3B-containing ARP2/3 complexes leading to ARP3B dissociation from the network. Acts as a key regulator of the SRF signaling pathway elicited by nerve growth factor and serum: mediates oxidation and subsequent depolymerization of nuclear actin, leading to increase MKL1/MRTF-A presence in the nucleus and promote SRF:MKL1/MRTF-A-dependent gene transcription. Does not activate SRF:MKL1/MRTF-A through RhoA. This is [F-actin]-monooxygenase MICAL2 from Mus musculus (Mouse).